We begin with the raw amino-acid sequence, 333 residues long: Tryptophan--tRNA ligase (333 aa).

ATP is bound by residues Gln-9 to Thr-11 and Gly-17 to Asn-18. A 'HIGH' region motif is present at residues Pro-10–Asn-18. Asp-140 is an L-tryptophan binding site. Residues Gly-152 to Asp-154, Ile-191, and Lys-200 to Ser-204 each bind ATP. The 'KMSKS' region motif lies at Lys-200 to Ser-204.

It belongs to the class-I aminoacyl-tRNA synthetase family. In terms of assembly, homodimer.

The protein localises to the cytoplasm. The catalysed reaction is tRNA(Trp) + L-tryptophan + ATP = L-tryptophyl-tRNA(Trp) + AMP + diphosphate + H(+). Its function is as follows. Catalyzes the attachment of tryptophan to tRNA(Trp). In Ureaplasma parvum serovar 3 (strain ATCC 700970), this protein is Tryptophan--tRNA ligase.